Here is a 250-residue protein sequence, read N- to C-terminus: Small ribosomal subunit protein uS2 (250 aa).

Belongs to the universal ribosomal protein uS2 family.

This Chloroherpeton thalassium (strain ATCC 35110 / GB-78) protein is Small ribosomal subunit protein uS2.